The following is a 316-amino-acid chain: 4-hydroxy-3-methylbut-2-enyl diphosphate reductase (316 aa).

C12 is a binding site for [4Fe-4S] cluster. Residues H43 and H81 each contribute to the (2E)-4-hydroxy-3-methylbut-2-enyl diphosphate site. Positions 43 and 81 each coordinate dimethylallyl diphosphate. The isopentenyl diphosphate site is built by H43 and H81. Residue C103 participates in [4Fe-4S] cluster binding. H131 contributes to the (2E)-4-hydroxy-3-methylbut-2-enyl diphosphate binding site. Residue H131 participates in dimethylallyl diphosphate binding. H131 is an isopentenyl diphosphate binding site. E133 serves as the catalytic Proton donor. T170 contacts (2E)-4-hydroxy-3-methylbut-2-enyl diphosphate. [4Fe-4S] cluster is bound at residue C198. S226, N228, and S271 together coordinate (2E)-4-hydroxy-3-methylbut-2-enyl diphosphate. Dimethylallyl diphosphate contacts are provided by S226, N228, and S271. 3 residues coordinate isopentenyl diphosphate: S226, N228, and S271.

This sequence belongs to the IspH family. Requires [4Fe-4S] cluster as cofactor.

It catalyses the reaction isopentenyl diphosphate + 2 oxidized [2Fe-2S]-[ferredoxin] + H2O = (2E)-4-hydroxy-3-methylbut-2-enyl diphosphate + 2 reduced [2Fe-2S]-[ferredoxin] + 2 H(+). The catalysed reaction is dimethylallyl diphosphate + 2 oxidized [2Fe-2S]-[ferredoxin] + H2O = (2E)-4-hydroxy-3-methylbut-2-enyl diphosphate + 2 reduced [2Fe-2S]-[ferredoxin] + 2 H(+). The protein operates within isoprenoid biosynthesis; dimethylallyl diphosphate biosynthesis; dimethylallyl diphosphate from (2E)-4-hydroxy-3-methylbutenyl diphosphate: step 1/1. It participates in isoprenoid biosynthesis; isopentenyl diphosphate biosynthesis via DXP pathway; isopentenyl diphosphate from 1-deoxy-D-xylulose 5-phosphate: step 6/6. In terms of biological role, catalyzes the conversion of 1-hydroxy-2-methyl-2-(E)-butenyl 4-diphosphate (HMBPP) into a mixture of isopentenyl diphosphate (IPP) and dimethylallyl diphosphate (DMAPP). Acts in the terminal step of the DOXP/MEP pathway for isoprenoid precursor biosynthesis. The polypeptide is 4-hydroxy-3-methylbut-2-enyl diphosphate reductase (Bacillus cereus (strain AH820)).